The primary structure comprises 146 residues: 3-dehydroquinate dehydratase (146 aa).

The active-site Proton acceptor is the Tyr-22. 3 residues coordinate substrate: Asn-73, His-79, and Asp-86. Residue His-99 is the Proton donor of the active site. Substrate is bound by residues 100 to 101 (LS) and Arg-110.

Belongs to the type-II 3-dehydroquinase family. Homododecamer.

It carries out the reaction 3-dehydroquinate = 3-dehydroshikimate + H2O. It participates in metabolic intermediate biosynthesis; chorismate biosynthesis; chorismate from D-erythrose 4-phosphate and phosphoenolpyruvate: step 3/7. Its function is as follows. Catalyzes a trans-dehydration via an enolate intermediate. In Synechococcus sp. (strain CC9902), this protein is 3-dehydroquinate dehydratase.